A 396-amino-acid chain; its full sequence is Bifunctional enzyme Fae/Hps (396 aa).

The formaldehyde-activating enzyme stretch occupies residues 1 to 161; that stretch reads MMLIGEALIG…HEKDRAAHAV (161 aa). H17 (proton donor) is an active-site residue. Residues D19, L48, K66, T68, and Q83 each coordinate substrate. A 3-hexulose-6-phosphate synthase region spans residues 162 to 396; the sequence is MGFKISKLWD…IDQFRIMTDF (235 aa).

The protein in the N-terminal section; belongs to the formaldehyde-activating enzyme family. In the C-terminal section; belongs to the HPS/KGPDC family. HPS subfamily.

It catalyses the reaction 5,6,7,8-tetrahydromethanopterin + formaldehyde = 5,10-methylenetetrahydromethanopterin + H2O. It carries out the reaction D-ribulose 5-phosphate + formaldehyde = D-arabino-hex-3-ulose 6-phosphate. The protein operates within carbohydrate biosynthesis; D-ribose 5-phosphate biosynthesis. Catalyzes the condensation of formaldehyde with tetrahydromethanopterin (H(4)MPT) to 5,10-methylenetetrahydromethanopterin. In terms of biological role, catalyzes the reversible formation of ribulose-5-phosphate and formaldehyde from 3-hexulose-6-phosphate. This Methanococcoides burtonii (strain DSM 6242 / NBRC 107633 / OCM 468 / ACE-M) protein is Bifunctional enzyme Fae/Hps.